Here is a 233-residue protein sequence, read N- to C-terminus: MSIHIGAKENEIAQTVLLPGDPLRAKYIAENFLEDAKCYNEVRGMYGFTGYYKGKRVSVQGTGMGVPSLSIYVNELINSYNVKNLIRIGTCGSLQPDIKLRDIVIAMSSSTDSAINKIRFNGMDYAPTASFKLLKKAYDKAMELGIQPKVGNILTTDTFYNDDPDSWKLWAKFGVLAVEMETAGLYTLAAKYNVDALTILTVSDSLVTGEATTAEERQKTFMNMVKIALEIAE.

His4 provides a ligand contact to a purine D-ribonucleoside. Phosphate contacts are provided by residues Gly20, Arg24, Arg43, and Arg87–Thr90. A purine D-ribonucleoside-binding positions include Glu179–Glu181 and Ser203–Asp204. The active-site Proton donor is the Asp204.

The protein belongs to the PNP/UDP phosphorylase family. As to quaternary structure, homohexamer; trimer of homodimers.

It catalyses the reaction a purine D-ribonucleoside + phosphate = a purine nucleobase + alpha-D-ribose 1-phosphate. The catalysed reaction is a purine 2'-deoxy-D-ribonucleoside + phosphate = a purine nucleobase + 2-deoxy-alpha-D-ribose 1-phosphate. Catalyzes the reversible phosphorolytic breakdown of the N-glycosidic bond in the beta-(deoxy)ribonucleoside molecules, with the formation of the corresponding free purine bases and pentose-1-phosphate. The sequence is that of Purine nucleoside phosphorylase DeoD-type from Thermoanaerobacter pseudethanolicus (strain ATCC 33223 / 39E) (Clostridium thermohydrosulfuricum).